The chain runs to 266 residues: Tryptophan synthase alpha chain (266 aa).

Residues E51 and D62 each act as proton acceptor in the active site.

Belongs to the TrpA family. As to quaternary structure, tetramer of two alpha and two beta chains.

It catalyses the reaction (1S,2R)-1-C-(indol-3-yl)glycerol 3-phosphate + L-serine = D-glyceraldehyde 3-phosphate + L-tryptophan + H2O. It participates in amino-acid biosynthesis; L-tryptophan biosynthesis; L-tryptophan from chorismate: step 5/5. Functionally, the alpha subunit is responsible for the aldol cleavage of indoleglycerol phosphate to indole and glyceraldehyde 3-phosphate. The chain is Tryptophan synthase alpha chain from Thermosynechococcus vestitus (strain NIES-2133 / IAM M-273 / BP-1).